We begin with the raw amino-acid sequence, 271 residues long: Isoprenyl transferase (271 aa).

Residue Asp35 is part of the active site. Asp35 is a Mg(2+) binding site. Substrate contacts are provided by residues 36-39 (GNGR), Trp40, Arg48, His52, and 80-82 (STE). Residue Asn83 is the Proton acceptor of the active site. Substrate contacts are provided by residues Trp84, Arg86, Arg207, and 213–215 (RIS). Glu226 is a Mg(2+) binding site.

This sequence belongs to the UPP synthase family. Homodimer. It depends on Mg(2+) as a cofactor.

Its function is as follows. Catalyzes the condensation of isopentenyl diphosphate (IPP) with allylic pyrophosphates generating different type of terpenoids. This chain is Isoprenyl transferase, found in Enterococcus faecalis (strain ATCC 700802 / V583).